We begin with the raw amino-acid sequence, 347 residues long: Neutral protease 2 homolog MGG_10927 (347 aa).

The signal sequence occupies residues 1-19 (MKYSVGITALLATLAQGAA). The propeptide occupies 20–176 (VMSKRDIPLD…RSYLAKRTMV (157 aa)). Intrachain disulfides connect C180–C250 and C257–C275. H299 lines the Zn(2+) pocket. E300 is a catalytic residue. H303 serves as a coordination point for Zn(2+).

The protein belongs to the peptidase M35 family. It depends on Zn(2+) as a cofactor.

Its subcellular location is the secreted. The catalysed reaction is Preferential cleavage of bonds with hydrophobic residues in P1'. Also 3-Asn-|-Gln-4 and 8-Gly-|-Ser-9 bonds in insulin B chain.. In terms of biological role, secreted metalloproteinase that allows assimilation of proteinaceous substrates. Shows high activities on basic nuclear substrates such as histone and protamine. In Pyricularia oryzae (strain 70-15 / ATCC MYA-4617 / FGSC 8958) (Rice blast fungus), this protein is Neutral protease 2 homolog MGG_10927.